We begin with the raw amino-acid sequence, 561 residues long: (+)-alpha-pinene synthase TPS2FN (561 aa).

(2E)-geranyl diphosphate-binding residues include R276, D313, D317, R455, and D458. Residues D313 and D317 each contribute to the Mg(2+) site. The DDXXD motif signature appears at 313-317 (DDIYD). Residues D458, T462, and E466 each coordinate Mg(2+).

The protein belongs to the terpene synthase family. Tpsb subfamily. Mg(2+) is required as a cofactor. The cofactor is Mn(2+). In terms of tissue distribution, expressed in glandular trichomes two to four weeks after flowering onset.

It catalyses the reaction (2E)-geranyl diphosphate = (1R,5R)-alpha-pinene + diphosphate. The catalysed reaction is (2E)-geranyl diphosphate = (4S)-limonene + diphosphate. The enzyme catalyses (2E)-geranyl diphosphate = sabinene + diphosphate. It carries out the reaction (2E)-geranyl diphosphate = beta-phellandrene + diphosphate. It catalyses the reaction (2E)-geranyl diphosphate = camphene + diphosphate. The catalysed reaction is (2E)-geranyl diphosphate = isoterpinolene + diphosphate. Its pathway is secondary metabolite biosynthesis; terpenoid biosynthesis. It participates in terpene metabolism; (-)-alpha-pinene biosynthesis; (-)-alpha-pinene from geranyl diphosphate: step 1/1. Its function is as follows. Involved in monoterpene (C10) olefins biosynthesis, constituants of cannabinoids and terpenoids-rich resins. Catalyzes mainly the conversion of (2E)-geranyl diphosphate to (+)-alpha-pinene, and also produces minor products such as camphene, sabinene, beta-phellandrene, (-)-limonene and isoterpinolene. The polypeptide is (+)-alpha-pinene synthase TPS2FN (Cannabis sativa (Hemp)).